The primary structure comprises 295 residues: UDP-N-acetylenolpyruvoylglucosamine reductase (295 aa).

Positions 24 to 188 constitute an FAD-binding PCMH-type domain; it reads KVGGNAEIFF…LKAVFKVNKG (165 aa). R168 is an active-site residue. S217 acts as the Proton donor in catalysis. Residue E287 is part of the active site.

The protein belongs to the MurB family. It depends on FAD as a cofactor.

It localises to the cytoplasm. The catalysed reaction is UDP-N-acetyl-alpha-D-muramate + NADP(+) = UDP-N-acetyl-3-O-(1-carboxyvinyl)-alpha-D-glucosamine + NADPH + H(+). The protein operates within cell wall biogenesis; peptidoglycan biosynthesis. In terms of biological role, cell wall formation. In Rickettsia felis (strain ATCC VR-1525 / URRWXCal2) (Rickettsia azadi), this protein is UDP-N-acetylenolpyruvoylglucosamine reductase.